A 1404-amino-acid chain; its full sequence is DNA-directed RNA polymerase subunit beta' (1404 aa).

Zn(2+)-binding residues include C72, C74, C87, and C90. Positions 463, 465, and 467 each coordinate Mg(2+). Zn(2+) is bound by residues C811, C885, C892, and C895.

The protein belongs to the RNA polymerase beta' chain family. As to quaternary structure, the RNAP catalytic core consists of 2 alpha, 1 beta, 1 beta' and 1 omega subunit. When a sigma factor is associated with the core the holoenzyme is formed, which can initiate transcription. Mg(2+) serves as cofactor. Zn(2+) is required as a cofactor.

It catalyses the reaction RNA(n) + a ribonucleoside 5'-triphosphate = RNA(n+1) + diphosphate. Functionally, DNA-dependent RNA polymerase catalyzes the transcription of DNA into RNA using the four ribonucleoside triphosphates as substrates. The polypeptide is DNA-directed RNA polymerase subunit beta' (Jannaschia sp. (strain CCS1)).